Reading from the N-terminus, the 251-residue chain is Orcokinin peptides type A (251 aa).

The first 20 residues, 1–20 (MTAQMFTIALLLSLSAIAAA), serve as a signal peptide directing secretion. 3 consecutive propeptides follow at residues 21–46 (GTIK…GAPV), 225–231 (DYDVFPD), and 249–251 (NVE).

Belongs to the orcokinin family.

It localises to the secreted. Myotropic peptides that enhance both the frequency and amplitude of spontaneous hindgut contractions. This Procambarus clarkii (Red swamp crayfish) protein is Orcokinin peptides type A.